Reading from the N-terminus, the 269-residue chain is Ribonuclease HII (269 aa).

The 195-residue stretch at 28-222 (RHVAGADEAG…VSGRRGAPPR (195 aa)) folds into the RNase H type-2 domain. Residues Asp-34, Glu-35, and Asp-128 each contribute to the a divalent metal cation site.

Belongs to the RNase HII family. Mn(2+) serves as cofactor. Mg(2+) is required as a cofactor.

It is found in the cytoplasm. It catalyses the reaction Endonucleolytic cleavage to 5'-phosphomonoester.. Endonuclease that specifically degrades the RNA of RNA-DNA hybrids. This is Ribonuclease HII from Salinispora arenicola (strain CNS-205).